The chain runs to 463 residues: MGVGPASLLAALLLLLSGDRAVRCDTPANCTYLDLLGTWVFQVGSSGSLRDVNCSVMGPPEKKVVVHLQKLDTAYDDLGNSGHFTIIYNQGFEIVLNDYKWFAFFKYKEEGIKVTIYCNETMTGWVHDVLGRNWACFTGKKVGTASENVYVNTAHLKNSQEKYSNRLYKYDHNFVKAINAIQKSWTATTYMEYETLTLGDMIKRSGGHSRKIPRPKPTPLTAEIQQKILHLPTSWDWRNVHGINFVSPVRNQASCGSCYSFASVGMLEARIRILTNNSQTPILSSQEVVSCSQYAQGCEGGFPYLTAGKYAQDFGLVEEACFPYTGTDSPCKMKEDCFRYYSSEYHYVGGFYGGCNEALMKLELVYHGPLAVAFEVYDDFLHYQNGIYHHTGLRDPFNPFELTNHAVLLVGYGTDSASGMDYWIVKNSWGTSWGEDGYFRIRRGTDECAIESIAVAATPIPKL.

Positions methionine 1–cysteine 24 are cleaved as a signal peptide. Asparagine 29, asparagine 53, and asparagine 119 each carry an N-linked (GlcNAc...) asparagine glycan. 5 cysteine pairs are disulfide-bonded: cysteine 30/cysteine 118, cysteine 54/cysteine 136, cysteine 255/cysteine 298, cysteine 291/cysteine 331, and cysteine 321/cysteine 337. A propeptide spanning residues alanine 135 to histidine 230 is cleaved from the precursor. Cysteine 258 is an active-site residue. An N-linked (GlcNAc...) asparagine glycan is attached at asparagine 276. Phenylalanine 302 and tyrosine 304 together coordinate chloride. Tyrosine 347 is a chloride binding site. Catalysis depends on residues histidine 405 and asparagine 427.

Belongs to the peptidase C1 family. As to quaternary structure, tetramer of heterotrimers consisting of exclusion domain, heavy- and light chains. It depends on chloride as a cofactor.

It is found in the lysosome. The catalysed reaction is Release of an N-terminal dipeptide, Xaa-Yaa-|-Zaa-, except when Xaa is Arg or Lys, or Yaa or Zaa is Pro.. Its function is as follows. Thiol protease. Has dipeptidylpeptidase activity. Active against a broad range of dipeptide substrates composed of both polar and hydrophobic amino acids. Proline cannot occupy the P1 position and arginine cannot occupy the P2 position of the substrate. Can act as both an exopeptidase and endopeptidase. Activates serine proteases such as elastase, cathepsin G and granzymes A and B. The polypeptide is Dipeptidyl peptidase 1 (CTSC) (Macaca fascicularis (Crab-eating macaque)).